The chain runs to 502 residues: Probable cytosol aminopeptidase (502 aa).

Mn(2+) contacts are provided by K254 and D259. K266 is an active-site residue. Mn(2+) is bound by residues D277, D336, and E338. R340 is an active-site residue.

The protein belongs to the peptidase M17 family. The cofactor is Mn(2+).

It is found in the cytoplasm. The enzyme catalyses Release of an N-terminal amino acid, Xaa-|-Yaa-, in which Xaa is preferably Leu, but may be other amino acids including Pro although not Arg or Lys, and Yaa may be Pro. Amino acid amides and methyl esters are also readily hydrolyzed, but rates on arylamides are exceedingly low.. The catalysed reaction is Release of an N-terminal amino acid, preferentially leucine, but not glutamic or aspartic acids.. Its function is as follows. Presumably involved in the processing and regular turnover of intracellular proteins. Catalyzes the removal of unsubstituted N-terminal amino acids from various peptides. In Tropheryma whipplei (strain TW08/27) (Whipple's bacillus), this protein is Probable cytosol aminopeptidase.